Reading from the N-terminus, the 518-residue chain is GMP synthase [glutamine-hydrolyzing] (518 aa).

One can recognise a Glutamine amidotransferase type-1 domain in the interval R6 to D200. C84 functions as the Nucleophile in the catalytic mechanism. Catalysis depends on residues H175 and E177. The 193-residue stretch at W201 to R393 folds into the GMPS ATP-PPase domain. S228–S234 is an ATP binding site.

As to quaternary structure, homodimer.

The catalysed reaction is XMP + L-glutamine + ATP + H2O = GMP + L-glutamate + AMP + diphosphate + 2 H(+). The protein operates within purine metabolism; GMP biosynthesis; GMP from XMP (L-Gln route): step 1/1. Functionally, catalyzes the synthesis of GMP from XMP. This Cereibacter sphaeroides (strain ATCC 17025 / ATH 2.4.3) (Rhodobacter sphaeroides) protein is GMP synthase [glutamine-hydrolyzing].